We begin with the raw amino-acid sequence, 150 residues long: UPF0756 membrane protein ABAYE1440 (150 aa).

4 helical membrane passes run 1-21 (MLAQFDVNLVVLLVLLICGLL), 45-65 (FFPYIQAHGLNLGILILTIGV), 83-103 (FISFKSLVAIAIGLLVAWLGG), and 115-135 (VVAGLLIGTVAGVALLRGVPV).

It belongs to the UPF0756 family.

It is found in the cell membrane. The chain is UPF0756 membrane protein ABAYE1440 from Acinetobacter baumannii (strain AYE).